Consider the following 479-residue polypeptide: uncharacterized protein (479 aa).

Residues 180–203 (LGGEHSDSTNTELANPSSTTTRIT) form a disordered region. The span at 187-202 (STNTELANPSSTTTRI) shows a compositional bias: polar residues. The PE-PPE domain maps to 240 to 462 (PGTTPEVVSY…LKPLVDAGYS (223 aa)).

This sequence belongs to the mycobacterial PPE family.

This is an uncharacterized protein from Mycobacterium tuberculosis (strain CDC 1551 / Oshkosh).